The sequence spans 408 residues: Dual-specificity RNA methyltransferase RlmN (408 aa).

Catalysis depends on glutamate 122, which acts as the Proton acceptor. The region spanning glutamate 128–arginine 369 is the Radical SAM core domain. Cysteine 135 and cysteine 380 are joined by a disulfide. [4Fe-4S] cluster contacts are provided by cysteine 142, cysteine 146, and cysteine 149. Residues glycine 206–glutamate 207, serine 238, serine 260–histidine 262, and asparagine 337 contribute to the S-adenosyl-L-methionine site. Residue cysteine 380 is the S-methylcysteine intermediate of the active site.

It belongs to the radical SAM superfamily. RlmN family. Requires [4Fe-4S] cluster as cofactor.

Its subcellular location is the cytoplasm. The enzyme catalyses adenosine(2503) in 23S rRNA + 2 reduced [2Fe-2S]-[ferredoxin] + 2 S-adenosyl-L-methionine = 2-methyladenosine(2503) in 23S rRNA + 5'-deoxyadenosine + L-methionine + 2 oxidized [2Fe-2S]-[ferredoxin] + S-adenosyl-L-homocysteine. It carries out the reaction adenosine(37) in tRNA + 2 reduced [2Fe-2S]-[ferredoxin] + 2 S-adenosyl-L-methionine = 2-methyladenosine(37) in tRNA + 5'-deoxyadenosine + L-methionine + 2 oxidized [2Fe-2S]-[ferredoxin] + S-adenosyl-L-homocysteine. Specifically methylates position 2 of adenine 2503 in 23S rRNA and position 2 of adenine 37 in tRNAs. m2A2503 modification seems to play a crucial role in the proofreading step occurring at the peptidyl transferase center and thus would serve to optimize ribosomal fidelity. In Chelativorans sp. (strain BNC1), this protein is Dual-specificity RNA methyltransferase RlmN.